A 234-amino-acid chain; its full sequence is C2H2-type zinc-finger transcription factor clz7 (234 aa).

2 disordered regions span residues Arg45–Asp99 and Ser118–Ala154. Low complexity-rich tracts occupy residues Ser66 to Ser77 and Ser140 to Ala154. Residues Asn159–Asn184 form a C2H2-type 1; degenerate zinc finger. The C2H2-type 2; degenerate zinc finger occupies Phe191 to Asn223.

The protein belongs to the GLI C2H2-type zinc-finger protein family.

The protein resides in the nucleus. Transcription factor that probably regulates the expression of the gene cluster that mediates the biosynthesis of squalestatin S1 (SQS1, also known as zaragozic acid A), a heavily oxidized fungal polyketide that offers potent cholesterol lowering activity by targeting squalene synthase (SS). This is C2H2-type zinc-finger transcription factor clz7 from Cochliobolus lunatus (Filamentous fungus).